The sequence spans 252 residues: Probable transcriptional regulatory protein Bcav_1989 (252 aa).

The protein belongs to the TACO1 family.

Its subcellular location is the cytoplasm. The protein is Probable transcriptional regulatory protein Bcav_1989 of Beutenbergia cavernae (strain ATCC BAA-8 / DSM 12333 / CCUG 43141 / JCM 11478 / NBRC 16432 / NCIMB 13614 / HKI 0122).